The sequence spans 213 residues: Endoplasmic reticulum vesicle protein 25 (213 aa).

A signal peptide spans 1–20 (MILRIPSLLYLFTLLTAVYA). The Lumenal portion of the chain corresponds to 21–181 (VKFDLTSDRN…TNESTNQRVK (161 aa)). Residues 33-122 (PSIIWNFASA…VRSVELDVDI (90 aa)) enclose the GOLD domain. The chain crosses the membrane as a helical span at residues 182–202 (VFSVLIICCTIGLGVWQLLHL). Over 203–213 (RSFFKRKYLID) the chain is Cytoplasmic.

This sequence belongs to the EMP24/GP25L family.

Its subcellular location is the endoplasmic reticulum membrane. It localises to the golgi apparatus membrane. Constituent of COPII-coated endoplasmic reticulum-derived transport vesicles. Required for efficient transport of a subset of secretory proteins to the Golgi. Facilitates retrograde transport from the Golgi to the endoplasmic reticulum. This is Endoplasmic reticulum vesicle protein 25 (ERV25) from Cryptococcus neoformans var. neoformans serotype D (strain B-3501A) (Filobasidiella neoformans).